Here is a 350-residue protein sequence, read N- to C-terminus: Induced myeloid leukemia cell differentiation protein Mcl-1 homolog (350 aa).

Residues Lys5 and Lys40 each participate in a glycyl lysine isopeptide (Lys-Gly) (interchain with G-Cter in ubiquitin) cross-link. The tract at residues 104–175 (CASPPEEMEG…PAEEEEDELF (72 aa)) is PEST-like. Ser121 is subject to Phosphoserine. Lys136 participates in a covalent cross-link: Glycyl lysine isopeptide (Lys-Gly) (interchain with G-Cter in ubiquitin). The disordered stretch occupies residues 148-170 (GEASSGPGTDGSLPSTPPPAEEE). The residue at position 159 (Ser159) is a Phosphoserine; by GSK3-alpha and GSK3-beta. A Phosphoserine modification is found at Ser162. Position 163 is a phosphothreonine; by MAPK (Thr163). Residues Lys194 and Lys197 each participate in a glycyl lysine isopeptide (Lys-Gly) (interchain with G-Cter in ubiquitin) cross-link. The short motif at 209–223 (ALETLRRVGDGVQRN) is the BH3 element. Residues 252–272 (HVFSDGVTNWGRIVTLISFGA) carry the BH1 motif. The short motif at 304–319 (DWLVKQRGWDGFVEFF) is the BH2 element. The chain crosses the membrane as a helical span at residues 328–348 (IRNVLLAFAGVAGVGAGLAYL).

Belongs to the Bcl-2 family. Interacts with HIF3A (via C-terminus domain). Interacts with BOK, BIK, BAX, BAK1, and TPT1. Interacts with unphosphorylated BAD. Interacts with BMF, BBC3 and PMAIP1. Interacts with BOP. Interacts with BCL2L11; may sequester BCL2L11 to prevent its pro-apoptotic activity. Interacts with GIMAP5 and HSPA8/HSC70; the interaction between HSPA8 and MCL1 is impaired in the absence of GIMAP5. Post-translationally, cleaved by CASP3 during apoptosis, yielding a pro-apoptotic C-terminal fragment. Rapidly degraded in the absence of phosphorylation in the PEST region. In terms of processing, phosphorylated on Ser-159, by GSK3, in response to IL3/interleukin-3 withdrawal. Phosphorylation at Ser-159 induces ubiquitination and proteasomal degradation, abrogating the anti-apoptotic activity. Treatment with taxol or okadaic acid induces phosphorylation on additional sites. Post-translationally, ubiquitinated. Ubiquitination is induced by phosphorylation at Ser-159. Deubiquitinated by USP20; leading to increased stability.

It localises to the membrane. It is found in the cytoplasm. Its subcellular location is the mitochondrion. The protein resides in the nucleus. The protein localises to the nucleoplasm. Its function is as follows. Involved in the regulation of apoptosis versus cell survival, and in the maintenance of viability but not of proliferation. Mediates its effects by interactions with a number of other regulators of apoptosis. This Felis catus (Cat) protein is Induced myeloid leukemia cell differentiation protein Mcl-1 homolog (MCL1).